The following is a 64-amino-acid chain: Large ribosomal subunit protein uL29 (64 aa).

The protein belongs to the universal ribosomal protein uL29 family.

This is Large ribosomal subunit protein uL29 from Legionella pneumophila (strain Lens).